The following is a 59-amino-acid chain: Ribosome biogenesis protein Nop10 (59 aa).

It belongs to the NOP10 family.

Its function is as follows. Involved in ribosome biogenesis; more specifically in 18S rRNA pseudouridylation and in cleavage of pre-rRNA. The polypeptide is Ribosome biogenesis protein Nop10 (Thermococcus gammatolerans (strain DSM 15229 / JCM 11827 / EJ3)).